A 413-amino-acid chain; its full sequence is CinA-like protein (413 aa).

The protein belongs to the CinA family.

The sequence is that of CinA-like protein from Desulfosudis oleivorans (strain DSM 6200 / JCM 39069 / Hxd3) (Desulfococcus oleovorans).